Reading from the N-terminus, the 594-residue chain is Pentatricopeptide repeat-containing protein At1g15480, mitochondrial (594 aa).

The N-terminal 67 residues, 1–67 (MFALSKVLRR…WSSSTGRRSL (67 aa)), are a transit peptide targeting the mitochondrion. Residues 62–75 (TGRRSLSSDAGAKT) show a composition bias toward low complexity. The segment at 62 to 109 (TGRRSLSSDAGAKTTGDDDDLEDKNVDLATPDETSSDSEDGEEFSGDE) is disordered. Over residues 95–109 (TSSDSEDGEEFSGDE) the composition is skewed to acidic residues. PPR repeat units follow at residues 226–260 (GELV…GFPL), 261–294 (STFT…NLKP), 295–329 (NLNT…GVEL), 330–364 (DLRA…SLEE), 432–466 (SSNV…GCNI), 467–502 (GALT…QIKP), and 503–537 (LMSS…GYQS).

The protein belongs to the PPR family. P subfamily.

Its subcellular location is the mitochondrion. In Arabidopsis thaliana (Mouse-ear cress), this protein is Pentatricopeptide repeat-containing protein At1g15480, mitochondrial.